Reading from the N-terminus, the 546-residue chain is NADH-ubiquinone oxidoreductase chain 5 (546 aa).

16 helical membrane-spanning segments follow: residues 1–21 (MFLL…SPIA), 31–51 (IIAI…YYEV), 52–72 (VFMG…VGTF), 82–102 (LLTA…HMYA), 112–132 (LNLF…LVAA), 135–155 (LLVM…LIGY), 175–195 (VSDG…GSLE), 198–218 (LLNV…GAMG), 237–257 (TPVS…YLLV), 264–284 (EMFV…FGAT), 291–310 (VIAY…LGLG), 321–341 (LMTH…VISG), 358–378 (AMFT…WPEL), 387–407 (ILNL…TLLL), 440–460 (VLPI…VWVG), and 468–488 (LFFL…AGIL).

Belongs to the complex I subunit 5 family.

It is found in the mitochondrion inner membrane. It carries out the reaction a ubiquinone + NADH + 5 H(+)(in) = a ubiquinol + NAD(+) + 4 H(+)(out). Core subunit of the mitochondrial membrane respiratory chain NADH dehydrogenase (Complex I) that is believed to belong to the minimal assembly required for catalysis. Complex I functions in the transfer of electrons from NADH to the respiratory chain. The immediate electron acceptor for the enzyme is believed to be ubiquinone. This is NADH-ubiquinone oxidoreductase chain 5 (ND5) from Chlamydomonas reinhardtii (Chlamydomonas smithii).